Reading from the N-terminus, the 337-residue chain is Adenosine deaminase-like protein (337 aa).

Positions 14 and 16 each coordinate Zn(2+). Residues His-16, Asn-18, His-66, 98–101 (TTPK), and Gly-171 contribute to the N(6)-methyl-AMP site. Position 198 (His-198) interacts with Zn(2+). Residues Glu-201, Asp-276, and Asp-277 each contribute to the N(6)-methyl-AMP site. Glu-201 (proton donor) is an active-site residue. Asp-276 is a binding site for Zn(2+).

Belongs to the metallo-dependent hydrolases superfamily. Adenosine and AMP deaminases family. Monomer. Zn(2+) serves as cofactor.

It catalyses the reaction N(6)-methyl-AMP + H2O + H(+) = IMP + methylamine. Functionally, catalyzes the hydrolysis of the free cytosolic methylated adenosine nucleotide N(6)-methyl-AMP (N6-mAMP) to produce inositol monophosphate (IMP) and methylamine. Is required for the catabolism of cytosolic N6-mAMP, which is derived from the degradation of mRNA containing N6-methylated adenine (m6A). In Drosophila melanogaster (Fruit fly), this protein is Adenosine deaminase-like protein (Ada).